Consider the following 102-residue polypeptide: uncharacterized protein (102 aa).

A helical membrane pass occupies residues 5–27 (IYRSNLVIVITLFVSLSYYHTCF).

It is found in the host membrane. This is an uncharacterized protein from Microplitis demolitor (Parasitoid wasp).